A 433-amino-acid chain; its full sequence is Methylenetetrahydrofolate--tRNA-(uracil-5-)-methyltransferase TrmFO (433 aa).

7–12 (GGGLAG) is a binding site for FAD.

Belongs to the MnmG family. TrmFO subfamily. Requires FAD as cofactor.

It is found in the cytoplasm. The catalysed reaction is uridine(54) in tRNA + (6R)-5,10-methylene-5,6,7,8-tetrahydrofolate + NADH + H(+) = 5-methyluridine(54) in tRNA + (6S)-5,6,7,8-tetrahydrofolate + NAD(+). It carries out the reaction uridine(54) in tRNA + (6R)-5,10-methylene-5,6,7,8-tetrahydrofolate + NADPH + H(+) = 5-methyluridine(54) in tRNA + (6S)-5,6,7,8-tetrahydrofolate + NADP(+). Its function is as follows. Catalyzes the folate-dependent formation of 5-methyl-uridine at position 54 (M-5-U54) in all tRNAs. The protein is Methylenetetrahydrofolate--tRNA-(uracil-5-)-methyltransferase TrmFO of Natranaerobius thermophilus (strain ATCC BAA-1301 / DSM 18059 / JW/NM-WN-LF).